A 376-amino-acid polypeptide reads, in one-letter code: N-acetyldiaminopimelate deacetylase (376 aa).

Asp-69 is an active-site residue. The active-site Proton acceptor is the Glu-128.

It belongs to the peptidase M20A family. N-acetyldiaminopimelate deacetylase subfamily.

The enzyme catalyses N-acetyl-(2S,6S)-2,6-diaminopimelate + H2O = (2S,6S)-2,6-diaminopimelate + acetate. The protein operates within amino-acid biosynthesis; L-lysine biosynthesis via DAP pathway; LL-2,6-diaminopimelate from (S)-tetrahydrodipicolinate (acetylase route): step 3/3. Its function is as follows. Catalyzes the conversion of N-acetyl-diaminopimelate to diaminopimelate and acetate. The chain is N-acetyldiaminopimelate deacetylase from Bacillus cereus (strain B4264).